The primary structure comprises 629 residues: Ionotropic receptor 75a (629 aa).

Topologically, residues Met-1–Pro-335 are extracellular. N-linked (GlcNAc...) asparagine glycosylation is found at Asn-61, Asn-112, Asn-126, Asn-144, Asn-166, and Asn-232. Residues Leu-336 to Phe-356 traverse the membrane as a helical segment. Residues Tyr-357–Ser-374 are Cytoplasmic-facing. Residues Leu-375–Pro-395 traverse the membrane as a helical segment. The Extracellular segment spans residues Arg-396–Leu-402. Residues Ile-403–Val-423 form a helical membrane-spanning segment. Over Ser-424–Tyr-592 the chain is Cytoplasmic. The helical transmembrane segment at Val-593–Val-613 threads the bilayer. Residues Glu-614–Pro-629 lie on the Extracellular side of the membrane.

It belongs to the glutamate-gated ion channel (TC 1.A.10.1) family. As to expression, expressed in acetic-acid-sensing neurons in the antennal coeloconic 2 (ac2) and antennal coeloconic 3 (ac3) sensilla class of sensory hairs (at protein level).

The protein localises to the cell membrane. Its subcellular location is the cell projection. It is found in the dendrite. Its function is as follows. Odorant receptor for acetic and propionic acid. Functions as part of an olfactory receptor complex including the ionotropic receptor coreceptor Ir8a. This Drosophila melanogaster (Fruit fly) protein is Ionotropic receptor 75a.